The sequence spans 98 residues: NADH-ubiquinone oxidoreductase chain 4L (98 aa).

3 consecutive transmembrane segments (helical) span residues 2–22 (PPIF…TLIF), 29–49 (SLLC…LIIL), and 61–81 (ILLL…LVMV).

Belongs to the complex I subunit 4L family. In terms of assembly, core subunit of respiratory chain NADH dehydrogenase (Complex I) which is composed of 45 different subunits.

It localises to the mitochondrion inner membrane. It catalyses the reaction a ubiquinone + NADH + 5 H(+)(in) = a ubiquinol + NAD(+) + 4 H(+)(out). In terms of biological role, core subunit of the mitochondrial membrane respiratory chain NADH dehydrogenase (Complex I) which catalyzes electron transfer from NADH through the respiratory chain, using ubiquinone as an electron acceptor. Part of the enzyme membrane arm which is embedded in the lipid bilayer and involved in proton translocation. The sequence is that of NADH-ubiquinone oxidoreductase chain 4L (MT-ND4L) from Avahi occidentalis (Western woolly lemur).